The following is a 173-amino-acid chain: Alpha-crystallin B chain (173 aa).

N-acetylmethionine is present on M1. Residues 54–162 enclose the sHSP domain; it reads RLPSWIESGL…PERSIPITRE (109 aa). Zn(2+)-binding residues include H81, H102, E104, and H109.

Belongs to the small heat shock protein (HSP20) family. As to quaternary structure, heteromer composed of three CRYAA and one CRYAB subunits. Aggregates with homologous proteins, including the small heat shock protein HSPB1, to form large heteromeric complexes. Inter-subunit bridging via zinc ions enhances stability, which is crucial as there is no protein turn over in the lens.

In terms of biological role, may contribute to the transparency and refractive index of the lens. The protein is Alpha-crystallin B chain (CRYAB) of Aquarana catesbeiana (American bullfrog).